The sequence spans 278 residues: ADP-dependent (S)-NAD(P)H-hydrate dehydratase (278 aa).

One can recognise a YjeF C-terminal domain in the interval 5 to 272 (TTEIVSRTII…TRIPTYMHRF (268 aa)). The (6S)-NADPHX site is built by A40, G103, and H152. G214 provides a ligand contact to AMP. D215 is a (6S)-NADPHX binding site.

Belongs to the NnrD/CARKD family. As to quaternary structure, homotetramer. The cofactor is Mg(2+).

The catalysed reaction is (6S)-NADHX + ADP = AMP + phosphate + NADH + H(+). The enzyme catalyses (6S)-NADPHX + ADP = AMP + phosphate + NADPH + H(+). Functionally, catalyzes the dehydration of the S-form of NAD(P)HX at the expense of ADP, which is converted to AMP. Together with NAD(P)HX epimerase, which catalyzes the epimerization of the S- and R-forms, the enzyme allows the repair of both epimers of NAD(P)HX, a damaged form of NAD(P)H that is a result of enzymatic or heat-dependent hydration. The polypeptide is ADP-dependent (S)-NAD(P)H-hydrate dehydratase (Lactiplantibacillus plantarum (strain ATCC BAA-793 / NCIMB 8826 / WCFS1) (Lactobacillus plantarum)).